The primary structure comprises 176 residues: MTKEWISLGQLGKPFGIKGWLRLNVRETVLCELKTPISLKLSKPDFHFPEKEITLLEIRPHGGKFIVRFEGVTTPEEAAKWIGGFLFLPQKLLPKIETKNEFYITDLIGLQAIDESGKKLDWKLKDVQDNPAHPILVFVKENGEEILIPFLQVFVGDLDLEKNTIVLIQPEIWNEI.

The region spanning 99–174 (KNEFYITDLI…IVLIQPEIWN (76 aa)) is the PRC barrel domain.

This sequence belongs to the RimM family. As to quaternary structure, binds ribosomal protein uS19.

The protein resides in the cytoplasm. Its function is as follows. An accessory protein needed during the final step in the assembly of 30S ribosomal subunit, possibly for assembly of the head region. Essential for efficient processing of 16S rRNA. May be needed both before and after RbfA during the maturation of 16S rRNA. It has affinity for free ribosomal 30S subunits but not for 70S ribosomes. The polypeptide is Ribosome maturation factor RimM (Leptospira interrogans serogroup Icterohaemorrhagiae serovar copenhageni (strain Fiocruz L1-130)).